A 164-amino-acid polypeptide reads, in one-letter code: Large ribosomal subunit protein uL10 (164 aa).

It belongs to the universal ribosomal protein uL10 family. Part of the ribosomal stalk of the 50S ribosomal subunit. The N-terminus interacts with L11 and the large rRNA to form the base of the stalk. The C-terminus forms an elongated spine to which L12 dimers bind in a sequential fashion forming a multimeric L10(L12)X complex.

Its function is as follows. Forms part of the ribosomal stalk, playing a central role in the interaction of the ribosome with GTP-bound translation factors. In Helicobacter pylori (strain HPAG1), this protein is Large ribosomal subunit protein uL10.